Consider the following 293-residue polypeptide: Porphobilinogen deaminase (293 aa).

Cys235 carries the post-translational modification S-(dipyrrolylmethanemethyl)cysteine.

This sequence belongs to the HMBS family. In terms of assembly, monomer. Dipyrromethane is required as a cofactor.

The catalysed reaction is 4 porphobilinogen + H2O = hydroxymethylbilane + 4 NH4(+). The protein operates within porphyrin-containing compound metabolism; protoporphyrin-IX biosynthesis; coproporphyrinogen-III from 5-aminolevulinate: step 2/4. In terms of biological role, tetrapolymerization of the monopyrrole PBG into the hydroxymethylbilane pre-uroporphyrinogen in several discrete steps. In Ruminiclostridium cellulolyticum (strain ATCC 35319 / DSM 5812 / JCM 6584 / H10) (Clostridium cellulolyticum), this protein is Porphobilinogen deaminase.